The sequence spans 315 residues: MPDMKLFAGNAIPELAQRVANRLYTNLGDAAVGRFSDGEVSVQVNENVRGGDIFIIQSTCAPTNDNLMELVVMVDALRRASAGRITAVIPYFGYARQDRRVRSARVPITAKVVADFLSSVGVDRVLTVDLHAEQIQGFFDVPVDNVFGSPILLEDMLQKELENPIVVSPDIGGVVRARAIAKLLNDTDMAIIDKRRPRANVSQVMHIIGDVAGRDCVLVDDMIDTGGTLCKAAEALKERGAKRVFAYATHPIFSGNAVDNIKNSVIDEVVVCDTIPLSAEIKALNKVRTLTLSGMLAEAIRRISNEESISAMFEH.

ATP-binding positions include 37 to 39 (DGE) and 96 to 97 (RQ). Residues H131 and D170 each coordinate Mg(2+). Residue K194 is part of the active site. D-ribose 5-phosphate is bound by residues R196, D220, and 224 to 228 (DTGGT).

This sequence belongs to the ribose-phosphate pyrophosphokinase family. Class I subfamily. Homohexamer. Mg(2+) serves as cofactor.

It localises to the cytoplasm. The enzyme catalyses D-ribose 5-phosphate + ATP = 5-phospho-alpha-D-ribose 1-diphosphate + AMP + H(+). It functions in the pathway metabolic intermediate biosynthesis; 5-phospho-alpha-D-ribose 1-diphosphate biosynthesis; 5-phospho-alpha-D-ribose 1-diphosphate from D-ribose 5-phosphate (route I): step 1/1. Its function is as follows. Involved in the biosynthesis of the central metabolite phospho-alpha-D-ribosyl-1-pyrophosphate (PRPP) via the transfer of pyrophosphoryl group from ATP to 1-hydroxyl of ribose-5-phosphate (Rib-5-P). This is Ribose-phosphate pyrophosphokinase from Photorhabdus laumondii subsp. laumondii (strain DSM 15139 / CIP 105565 / TT01) (Photorhabdus luminescens subsp. laumondii).